The chain runs to 180 residues: ATP-dependent protease subunit HslV (180 aa).

Residue threonine 5 is part of the active site. 3 residues coordinate Na(+): glycine 165, cysteine 168, and threonine 171.

Belongs to the peptidase T1B family. HslV subfamily. In terms of assembly, a double ring-shaped homohexamer of HslV is capped on each side by a ring-shaped HslU homohexamer. The assembly of the HslU/HslV complex is dependent on binding of ATP.

It localises to the cytoplasm. The enzyme catalyses ATP-dependent cleavage of peptide bonds with broad specificity.. Its activity is regulated as follows. Allosterically activated by HslU binding. In terms of biological role, protease subunit of a proteasome-like degradation complex believed to be a general protein degrading machinery. The sequence is that of ATP-dependent protease subunit HslV from Helicobacter pylori (strain HPAG1).